The following is a 104-amino-acid chain: uncharacterized protein (104 aa).

The tract at residues 51-70 is disordered; sequence NPGRSLDNNKDVSDKGRSEF. Residues 57-70 show a composition bias toward basic and acidic residues; that stretch reads DNNKDVSDKGRSEF.

It belongs to the protein-tyrosine phosphatase family.

This is an uncharacterized protein from Xanthomonas campestris pv. campestris (strain ATCC 33913 / DSM 3586 / NCPPB 528 / LMG 568 / P 25).